We begin with the raw amino-acid sequence, 462 residues long: ATP synthase subunit beta (462 aa).

151-158 (GGAGVGKT) contacts ATP.

The protein belongs to the ATPase alpha/beta chains family. In terms of assembly, F-type ATPases have 2 components, CF(1) - the catalytic core - and CF(0) - the membrane proton channel. CF(1) has five subunits: alpha(3), beta(3), gamma(1), delta(1), epsilon(1). CF(0) has four main subunits: a(1), b(1), b'(1) and c(9-12).

Its subcellular location is the cell inner membrane. It catalyses the reaction ATP + H2O + 4 H(+)(in) = ADP + phosphate + 5 H(+)(out). Its function is as follows. Produces ATP from ADP in the presence of a proton gradient across the membrane. The catalytic sites are hosted primarily by the beta subunits. In Chlorobium chlorochromatii (strain CaD3), this protein is ATP synthase subunit beta.